The following is a 156-amino-acid chain: Small ribosomal subunit protein uS7 (156 aa).

It belongs to the universal ribosomal protein uS7 family. In terms of assembly, part of the 30S ribosomal subunit. Contacts proteins S9 and S11.

Functionally, one of the primary rRNA binding proteins, it binds directly to 16S rRNA where it nucleates assembly of the head domain of the 30S subunit. Is located at the subunit interface close to the decoding center, probably blocks exit of the E-site tRNA. This is Small ribosomal subunit protein uS7 from Mycobacterium leprae (strain TN).